The following is a 977-amino-acid chain: uncharacterized protein (977 aa).

Residues 1 to 24 (MMQQRSGSLSLLSNAVQAGQSSDP) are compositionally biased toward polar residues. The segment at 1-65 (MMQQRSGSLS…HEKTKAGKDR (65 aa)) is disordered. The zn(2)-C6 fungal-type DNA-binding region spans 72 to 99 (CQSCRKKKVKCSGERPSCDQCLKHNIPC). The segment at 176-195 (LSHPTIVPSSNSSSLLNSTN) is disordered. A compositionally biased stretch (low complexity) spans 177–195 (SHPTIVPSSNSSSLLNSTN). At Ser-220 the chain carries Phosphoserine. Disordered stretches follow at residues 287–307 (TDSL…DSNR), 357–380 (NSAS…NNSL), and 751–774 (HTPI…ANGA). Over residues 364 to 379 (STSYTNNNDTTSDNNS) the composition is skewed to low complexity. Residues 751–770 (HTPINVTNGESQNNSNNDPS) are compositionally biased toward polar residues.

Its subcellular location is the cytoplasm. It localises to the nucleus. This is an uncharacterized protein from Schizosaccharomyces pombe (strain 972 / ATCC 24843) (Fission yeast).